We begin with the raw amino-acid sequence, 116 residues long: Nucleoid-associated protein A9601_00191 (116 aa).

This sequence belongs to the YbaB/EbfC family. As to quaternary structure, homodimer.

The protein resides in the cytoplasm. Its subcellular location is the nucleoid. Its function is as follows. Binds to DNA and alters its conformation. May be involved in regulation of gene expression, nucleoid organization and DNA protection. The sequence is that of Nucleoid-associated protein A9601_00191 from Prochlorococcus marinus (strain AS9601).